A 313-amino-acid polypeptide reads, in one-letter code: Ribosomal RNA small subunit methyltransferase H (313 aa).

S-adenosyl-L-methionine-binding positions include 35 to 37 (GGH), Asp55, Phe79, Asp101, and Gln108.

Belongs to the methyltransferase superfamily. RsmH family.

The protein resides in the cytoplasm. It catalyses the reaction cytidine(1402) in 16S rRNA + S-adenosyl-L-methionine = N(4)-methylcytidine(1402) in 16S rRNA + S-adenosyl-L-homocysteine + H(+). Its function is as follows. Specifically methylates the N4 position of cytidine in position 1402 (C1402) of 16S rRNA. This chain is Ribosomal RNA small subunit methyltransferase H, found in Enterobacter sp. (strain 638).